A 319-amino-acid polypeptide reads, in one-letter code: Ankyrin repeat domain-containing protein 1 (319 aa).

Positions 63–89 (EKQLEAELKKKKLEQRSKLENLEDLEI) form a coiled coil. ANK repeat units follow at residues 152–181 (YKRT…QIEF), 185–214 (LEST…KISA), 218–247 (LLST…DLNA), 251–280 (EGDT…DLTI), and 284–315 (AGKT…KTSR).

Interacts with TTN/titin and YBX1.

It is found in the nucleus. Its function is as follows. May play an important role in endothelial cell activation. May act as a nuclear transcription factor that negatively regulates the expression of cardiac genes. In Oryctolagus cuniculus (Rabbit), this protein is Ankyrin repeat domain-containing protein 1 (ANKRD1).